The chain runs to 575 residues: Kelch repeat and BTB domain-containing protein 8 (575 aa).

Positions 23–91 (TDIVVEVDHG…AYTSRVILTE (69 aa)) constitute a BTB domain. Residues 126–228 (SIGVFIFADH…MEDAFIEKIP (103 aa)) enclose the BACK domain. Kelch repeat units lie at residues 310-364 (DIYI…YCCG), 365-415 (KMYA…EHKE), 417-455 (IYVL…VYKD), 457-506 (IYYI…LFQN), and 516-562 (QVTV…FECA).

The protein belongs to the KBTBD8 family. As to quaternary structure, component of the BCR(KBTBD8) E3 ubiquitin ligase complex, at least composed of CUL3, KBTBD8 and RBX1.

It localises to the cytoplasm. Its subcellular location is the cytoskeleton. It is found in the spindle. The protein resides in the golgi apparatus. In terms of biological role, substrate-specific adapter of a BCR (BTB-CUL3-RBX1) E3 ubiquitin ligase complex that acts as a regulator of neural crest specification. The BCR(KBTBD8) complex acts by mediating monoubiquitination of NOLC1 and TCOF1: monoubiquitination promotes the formation of a NOLC1-TCOF1 complex that acts as a platform to connect RNA polymerase I with enzymes responsible for ribosomal processing and modification, leading to remodel the translational program of differentiating cells in favor of neural crest specification. This Rattus norvegicus (Rat) protein is Kelch repeat and BTB domain-containing protein 8.